The sequence spans 254 residues: 4-hydroxy-tetrahydrodipicolinate reductase (254 aa).

Gly7 to Ile12 contributes to the NAD(+) binding site. Arg35 lines the NADP(+) pocket. NAD(+)-binding positions include Gly91–Thr93 and Ala115–Met118. The active-site Proton donor/acceptor is His147. His148 serves as a coordination point for (S)-2,3,4,5-tetrahydrodipicolinate. Lys151 functions as the Proton donor in the catalytic mechanism. Position 157-158 (Gly157–Thr158) interacts with (S)-2,3,4,5-tetrahydrodipicolinate.

Belongs to the DapB family.

Its subcellular location is the cytoplasm. The catalysed reaction is (S)-2,3,4,5-tetrahydrodipicolinate + NAD(+) + H2O = (2S,4S)-4-hydroxy-2,3,4,5-tetrahydrodipicolinate + NADH + H(+). The enzyme catalyses (S)-2,3,4,5-tetrahydrodipicolinate + NADP(+) + H2O = (2S,4S)-4-hydroxy-2,3,4,5-tetrahydrodipicolinate + NADPH + H(+). The protein operates within amino-acid biosynthesis; L-lysine biosynthesis via DAP pathway; (S)-tetrahydrodipicolinate from L-aspartate: step 4/4. Functionally, catalyzes the conversion of 4-hydroxy-tetrahydrodipicolinate (HTPA) to tetrahydrodipicolinate. The polypeptide is 4-hydroxy-tetrahydrodipicolinate reductase (Helicobacter acinonychis (strain Sheeba)).